Consider the following 214-residue polypeptide: Small ribosomal subunit protein uS2 (214 aa).

This sequence belongs to the universal ribosomal protein uS2 family.

This Methanococcoides burtonii (strain DSM 6242 / NBRC 107633 / OCM 468 / ACE-M) protein is Small ribosomal subunit protein uS2.